We begin with the raw amino-acid sequence, 227 residues long: MKLVVLCVLCGIALAAPRQKRLTVGTIAVTGGVGGSTGCVVTGNVLYANGFRLRELNPSEQQELVNYEKQVADYKAAVKQALKERQESLKSRMAGKKEKAVTPKEEDLPKAPQKPSFCTEDDTTQFYFDGCMVQGNKVYVGNTFARDLDQNEIQELKEFEKKQTVYQEYVQKQIQAQVSNLFGGADFFSSFFNGGSEKGSSTTTVAPVLPEDAPEQPAGPNFCTRIY.

Residues 1 to 15 (MKLVVLCVLCGIALA) form the signal peptide. Over residues 88-109 (SLKSRMAGKKEKAVTPKEEDLP) the composition is skewed to basic and acidic residues. The segment at 88 to 116 (SLKSRMAGKKEKAVTPKEEDLPKAPQKPS) is disordered. C131 and C223 are joined by a disulfide.

Belongs to the protease inhibitor I33 family.

It localises to the secreted. Its function is as follows. Aspartyl protease inhibitor. The protein is Aspartyl protease inhibitor (API) of Ostertagia ostertagi (Brown stomach worm).